The chain runs to 1150 residues: ATP-dependent helicase/deoxyribonuclease subunit B (1150 aa).

8–15 (GRSGSGKS) serves as a coordination point for ATP. [4Fe-4S] cluster-binding residues include Cys789, Cys1108, Cys1111, and Cys1117.

It belongs to the helicase family. AddB/RexB type 1 subfamily. Heterodimer of AddA and AddB. The cofactor is Mg(2+). Requires [4Fe-4S] cluster as cofactor.

Its function is as follows. The heterodimer acts as both an ATP-dependent DNA helicase and an ATP-dependent, dual-direction single-stranded exonuclease. Recognizes the chi site generating a DNA molecule suitable for the initiation of homologous recombination. The AddB subunit has 5' -&gt; 3' nuclease activity but not helicase activity. The polypeptide is ATP-dependent helicase/deoxyribonuclease subunit B (Clostridium tetani (strain Massachusetts / E88)).